A 484-amino-acid chain; its full sequence is tRNA sulfurtransferase (484 aa).

The THUMP domain occupies 63 to 167 (EAFAERLACI…KESLYLVSKR (105 aa)). ATP-binding positions include 185–186 (LI), K267, G289, and Q298. A disulfide bond links C346 and C458. Residues 406-484 (INSGEVIIDV…GYDNVKVYRP (79 aa)) form the Rhodanese domain. Catalysis depends on C458, which acts as the Cysteine persulfide intermediate.

This sequence belongs to the ThiI family.

The protein localises to the cytoplasm. The catalysed reaction is [ThiI sulfur-carrier protein]-S-sulfanyl-L-cysteine + a uridine in tRNA + 2 reduced [2Fe-2S]-[ferredoxin] + ATP + H(+) = [ThiI sulfur-carrier protein]-L-cysteine + a 4-thiouridine in tRNA + 2 oxidized [2Fe-2S]-[ferredoxin] + AMP + diphosphate. It carries out the reaction [ThiS sulfur-carrier protein]-C-terminal Gly-Gly-AMP + S-sulfanyl-L-cysteinyl-[cysteine desulfurase] + AH2 = [ThiS sulfur-carrier protein]-C-terminal-Gly-aminoethanethioate + L-cysteinyl-[cysteine desulfurase] + A + AMP + 2 H(+). It participates in cofactor biosynthesis; thiamine diphosphate biosynthesis. In terms of biological role, catalyzes the ATP-dependent transfer of a sulfur to tRNA to produce 4-thiouridine in position 8 of tRNAs, which functions as a near-UV photosensor. Also catalyzes the transfer of sulfur to the sulfur carrier protein ThiS, forming ThiS-thiocarboxylate. This is a step in the synthesis of thiazole, in the thiamine biosynthesis pathway. The sulfur is donated as persulfide by IscS. This chain is tRNA sulfurtransferase, found in Shewanella woodyi (strain ATCC 51908 / MS32).